The sequence spans 429 residues: 28S rRNA (cytosine-C(5))-methyltransferase (429 aa).

Position 2 is an N-acetylglycine (G2). At S167 the chain carries Phosphoserine. S-adenosyl-L-methionine is bound by residues 234–240 (CAAPGNK), D258, R263, and D305. C359 acts as the Nucleophile in catalysis.

It belongs to the class I-like SAM-binding methyltransferase superfamily. RsmB/NOP family. In terms of tissue distribution, ubiquitous. Detected in placenta, heart and skeletal muscle.

The protein localises to the nucleus. It is found in the nucleolus. It carries out the reaction cytidine(3782) in 28S rRNA + S-adenosyl-L-methionine = 5-methylcytidine(3782) in 28S rRNA + S-adenosyl-L-homocysteine + H(+). In terms of biological role, S-adenosyl-L-methionine-dependent methyltransferase that specifically methylates the C(5) position of cytosine 3782 (m5C3782) in 28S rRNA. m5C3782 promotes protein translation without affecting ribosome biogenesis and fidelity. Required for corpus callosum and cerebral cortex development. In Homo sapiens (Human), this protein is 28S rRNA (cytosine-C(5))-methyltransferase.